An 851-amino-acid chain; its full sequence is MAPDLASQRHSESFPSVNSRPNVILPGREGRREGLPPGGGTRGSLVPTRPVPPSPAPLGTSPYSWSRSGPGRGGGAGSSRVPRGVPGPAVCAPGSLLHHASPTQTMAAADGSLFDNPRTFSRRPPAQASRQAKATKRKYQASSEAPPAKRRNETSFLPAKKTSVKETQRTFKGNAQKMFSPKKHSVSTSDRNQEERQCIKTSSLFKNNPDIPELHRPVVKQVQEKVFTSAAFHELGLHPHLISTINTVLKMSSMTSVQKQSIPVLLEGRDALVRSQTGSGKTLAYCIPVVQSLQAMESKIQRSDGPYALVLVPTRELALQSFDTVQKLLKPFTWIVPGVLMGGEKRKSEKARLRKGINILISTPGRLVDHIKSTKNIHFSRLRWLVFDEADRILDLGFEKDITVILNAVNAECQKRQNVLLSATLTEGVTRLADISLHDPVSISVLDKSHDQLNPKDKAVQEVCPPPAGDKLDSFAIPESLKQHVTVVPSKLRLVCLAAFILQKCKFEEDQKMVVFFSSCELVEFHYSLFLQTLLSSSGAPASGQLPSASMRLKFLRLHGGMEQEERTAVFQEFSHSRRGVLLCTDVAARGLDLPQVTWIVQYNAPSSPAEYIHRIGRTARIGCHGSSLLILAPSEAEYVNSLASHKINVSEIKMEDILCVLTRDDCFKGKRWGAQKSHAVGPQEIRERATVLQTVFEDYVHSSERRVSWAKKALQSFIQAYATYPRELKHIFHVRSLHLGHVAKSFGLRDAPRNLSALTRKKRKAHVKRPDLHKKTQSKHSLAEILRSEYSSGMEADIAKVKKQNAPGEPGGRPLQHSLQPTPCFGRGKTLKWRKTQKGVQRDSKTSQKV.

Residues 1-196 form a disordered region; sequence MAPDLASQRH…STSDRNQEER (196 aa). The Q motif motif lies at 230–259; that stretch reads AAFHELGLHPHLISTINTVLKMSSMTSVQK. The 182-residue stretch at 262–443 folds into the Helicase ATP-binding domain; it reads IPVLLEGRDA…DISLHDPVSI (182 aa). 275–282 is an ATP binding site; the sequence is SQTGSGKT. The DEAD box motif lies at 388–391; the sequence is DEAD. The Helicase C-terminal domain maps to 480-659; it reads SLKQHVTVVP…VSEIKMEDIL (180 aa). Disordered regions lie at residues 762 to 784 and 804 to 851; these read KKRK…HSLA and KQNA…SQKV. Arginine 828 is modified (omega-N-methylarginine). The segment covering 841-851 has biased composition (basic and acidic residues); it reads VQRDSKTSQKV.

This sequence belongs to the DEAD box helicase family. DDX31/DBP7 subfamily. As to quaternary structure, interacts with NPM1; this interaction prevents interaction between NPM1 and HDM2. Weakly or undetectably expressed in normal organs. Up-regulated in renal cell carcinoma.

The protein resides in the nucleus. It is found in the nucleolus. The enzyme catalyses ATP + H2O = ADP + phosphate + H(+). In terms of biological role, may have DNA helicase activity and RNA helicase activity. Probably have ssDNA and RNA dependent ATPase activity. Plays a role in ribosome biogenesis and TP53/p53 regulation through its interaction with NPM1. The protein is ATP-dependent DNA helicase DDX31 of Homo sapiens (Human).